A 231-amino-acid chain; its full sequence is Cytochrome c oxidase subunit 2 (231 aa).

Topologically, residues 1 to 14 are mitochondrial intermembrane; the sequence is MAHPSQLGLQDAAS. A helical membrane pass occupies residues 15–45; sequence PVMEELLHFHDHALMIVFLISTLVFYIILAM. The Mitochondrial matrix portion of the chain corresponds to 46–59; sequence MTTKMTDKYILDAQ. Residues 60-87 form a helical membrane-spanning segment; that stretch reads EIEIVWTLLPAIVLILVALPSLRILYLI. Residues 88 to 231 lie on the Mitochondrial intermembrane side of the membrane; that stretch reads DEVENPHLTI…WSSSMLEEAX (144 aa). Residues histidine 161, cysteine 196, glutamate 198, cysteine 200, histidine 204, and methionine 207 each coordinate Cu cation. Position 198 (glutamate 198) interacts with Mg(2+).

Belongs to the cytochrome c oxidase subunit 2 family. As to quaternary structure, component of the cytochrome c oxidase (complex IV, CIV), a multisubunit enzyme composed of 14 subunits. The complex is composed of a catalytic core of 3 subunits MT-CO1, MT-CO2 and MT-CO3, encoded in the mitochondrial DNA, and 11 supernumerary subunits COX4I, COX5A, COX5B, COX6A, COX6B, COX6C, COX7A, COX7B, COX7C, COX8 and NDUFA4, which are encoded in the nuclear genome. The complex exists as a monomer or a dimer and forms supercomplexes (SCs) in the inner mitochondrial membrane with NADH-ubiquinone oxidoreductase (complex I, CI) and ubiquinol-cytochrome c oxidoreductase (cytochrome b-c1 complex, complex III, CIII), resulting in different assemblies (supercomplex SCI(1)III(2)IV(1) and megacomplex MCI(2)III(2)IV(2)). Found in a complex with TMEM177, COA6, COX18, COX20, SCO1 and SCO2. Interacts with TMEM177 in a COX20-dependent manner. Interacts with COX20. Interacts with COX16. The cofactor is Cu cation.

It is found in the mitochondrion inner membrane. It carries out the reaction 4 Fe(II)-[cytochrome c] + O2 + 8 H(+)(in) = 4 Fe(III)-[cytochrome c] + 2 H2O + 4 H(+)(out). Functionally, component of the cytochrome c oxidase, the last enzyme in the mitochondrial electron transport chain which drives oxidative phosphorylation. The respiratory chain contains 3 multisubunit complexes succinate dehydrogenase (complex II, CII), ubiquinol-cytochrome c oxidoreductase (cytochrome b-c1 complex, complex III, CIII) and cytochrome c oxidase (complex IV, CIV), that cooperate to transfer electrons derived from NADH and succinate to molecular oxygen, creating an electrochemical gradient over the inner membrane that drives transmembrane transport and the ATP synthase. Cytochrome c oxidase is the component of the respiratory chain that catalyzes the reduction of oxygen to water. Electrons originating from reduced cytochrome c in the intermembrane space (IMS) are transferred via the dinuclear copper A center (CU(A)) of subunit 2 and heme A of subunit 1 to the active site in subunit 1, a binuclear center (BNC) formed by heme A3 and copper B (CU(B)). The BNC reduces molecular oxygen to 2 water molecules using 4 electrons from cytochrome c in the IMS and 4 protons from the mitochondrial matrix. This is Cytochrome c oxidase subunit 2 (MT-CO2) from Latimeria chalumnae (Coelacanth).